We begin with the raw amino-acid sequence, 139 residues long: Nucleoside diphosphate kinase (139 aa).

The ATP site is built by K11, F59, R87, T93, R104, and N114. Catalysis depends on H117, which acts as the Pros-phosphohistidine intermediate.

This sequence belongs to the NDK family. In terms of assembly, homotetramer. The cofactor is Mg(2+).

The protein resides in the cytoplasm. It catalyses the reaction a 2'-deoxyribonucleoside 5'-diphosphate + ATP = a 2'-deoxyribonucleoside 5'-triphosphate + ADP. The catalysed reaction is a ribonucleoside 5'-diphosphate + ATP = a ribonucleoside 5'-triphosphate + ADP. Its function is as follows. Major role in the synthesis of nucleoside triphosphates other than ATP. The ATP gamma phosphate is transferred to the NDP beta phosphate via a ping-pong mechanism, using a phosphorylated active-site intermediate. In Wolbachia sp. subsp. Brugia malayi (strain TRS), this protein is Nucleoside diphosphate kinase.